The sequence spans 260 residues: Cell division protein DivIB (260 aa).

Residues 1–25 (MGAQDQNGKNHGGLFRDFQNRNVKK) lie on the Cytoplasmic side of the membrane. Residues 26–46 (MWPLVMPITIILLVMIFMISS) traverse the membrane as a helical segment. Topologically, residues 47 to 260 (YSRVKKVTVS…STKTTSVQGY (214 aa)) are extracellular. The POTRA domain maps to 48–119 (SRVKKVTVSG…NQVKIKVEEY (72 aa)).

Belongs to the FtsQ/DivIB family. DivIB subfamily.

Its subcellular location is the cell membrane. Functionally, cell division protein that may be involved in stabilizing or promoting the assembly of the division complex. This is Cell division protein DivIB from Lentilactobacillus buchneri (strain NRRL B-30929) (Lactobacillus buchneri).